Reading from the N-terminus, the 981-residue chain is Rab3 GTPase-activating protein catalytic subunit (981 aa).

A phosphoserine mark is found at Ser-83, Ser-379, Ser-537, Ser-579, Ser-581, and Ser-590. Residues 592–613 (TEELKGNGQESGKKGGPKEMAN) are disordered. The residue at position 664 (Ser-664) is a Phosphoserine. Thr-908 carries the phosphothreonine modification. Residues 908–937 (TPPEEELKRMGSPEERRQNSVSDFPPPAGR) form a disordered region. Over residues 912–925 (EELKRMGSPEERRQ) the composition is skewed to basic and acidic residues.

Belongs to the Rab3-GAP catalytic subunit family. As to quaternary structure, the Rab3 GTPase-activating complex is a heterodimer composed of RAB3GAP1 and RAB3GAP2. The Rab3 GTPase-activating complex interacts with DMXL2. Interacts with LMAN1. In terms of tissue distribution, ubiquitous.

It localises to the cytoplasm. It is found in the endoplasmic reticulum. The protein localises to the golgi apparatus. Its subcellular location is the cis-Golgi network. Its function is as follows. Catalytic subunit of the Rab3 GTPase-activating (Rab3GAP) complex composed of RAB3GAP1 and RAB3GAP2, which has GTPase-activating protein (GAP) activity towards various Rab3 subfamily members (RAB3A, RAB3B, RAB3C and RAB3D), RAB5A and RAB43, and guanine nucleotide exchange factor (GEF) activity towards RAB18. As part of the Rab3GAP complex, acts as a GAP for Rab3 proteins by converting active RAB3-GTP to the inactive form RAB3-GDP. Rab3 proteins are involved in regulated exocytosis of neurotransmitters and hormones. The Rab3GAP complex, acts as a GEF for RAB18 by promoting the conversion of inactive RAB18-GDP to the active form RAB18-GTP. Recruits and stabilizes RAB18 at the cis-Golgi membrane in fibroblasts where RAB18 is most likely activated. Also involved in RAB18 recruitment at the endoplasmic reticulum (ER) membrane where it maintains proper ER structure. Required for normal eye and brain development. May participate in neurodevelopmental processes such as proliferation, migration and differentiation before synapse formation, and non-synaptic vesicular release of neurotransmitters. This chain is Rab3 GTPase-activating protein catalytic subunit, found in Homo sapiens (Human).